The sequence spans 521 residues: Vang-like protein 2 (521 aa).

Positions 1–81 are disordered; it reads MDNDSQYSGY…TTVVTGTSEH (81 aa). Topologically, residues 1–108 are cytoplasmic; sequence MDNDSQYSGY…AKLDCSRHLG (108 aa). The segment covering 15-33 has biased composition (basic residues); that stretch reads GHSRSSRKHRDRRERHRSK. Over residues 57–67 the composition is skewed to basic and acidic residues; sequence ESTRGEDRDDN. Residues 69 to 81 show a composition bias toward low complexity; that stretch reads GETTTVVTGTSEH. A helical membrane pass occupies residues 109 to 129; the sequence is VVIGGALALLSFLTPIAFMLL. The Extracellular portion of the chain corresponds to 130–147; that stretch reads PQILWREDLEQCGTACEG. Residues 148 to 168 form a helical membrane-spanning segment; the sequence is LFISVAFKLLILLLGSWALFF. Residues 169 to 178 are Cytoplasmic-facing; sequence RRPKAFFPRV. A helical transmembrane segment spans residues 179–199; it reads FVFRALLMVLVFLLVVSYWLF. Topologically, residues 200–218 are extracellular; it reads YGVRILESRDKNYQGIVQY. A helical transmembrane segment spans residues 219 to 239; sequence AVSLVDALLFVHYLAVVLLEL. Over 240-521 the chain is Cytoplasmic; it reads RQLQPQFTVK…VMRLQSETSV (282 aa). A PDZ-binding motif is present at residues 518–521; sequence ETSV.

The protein belongs to the Vang family. Interacts with dvl/dsh. Interacts with prickle3.

It localises to the cell membrane. Functionally, has a role in non-canonical Wnt/planar cell polarity (PCP) signaling; can recruit dvl/dsh and prickle from the cytoplasm to the plasma membrane. Acts in a PCP complex to regulate the polarized assembly of fibronectrin on the surface of the mesoderm during gastrulation. Regulates convergent extension in both dorsal mesoderm and neural tissue without affecting cell fate. Regulates neural fold closure during neurulation. May be required for cell surface localization of fzd3 and fzd6 in the inner ear. This chain is Vang-like protein 2, found in Xenopus tropicalis (Western clawed frog).